Consider the following 172-residue polypeptide: Crossover junction endodeoxyribonuclease RuvC (172 aa).

Catalysis depends on residues Asp12, Glu71, and Asp143. Mg(2+)-binding residues include Asp12, Glu71, and Asp143.

Belongs to the RuvC family. As to quaternary structure, homodimer which binds Holliday junction (HJ) DNA. The HJ becomes 2-fold symmetrical on binding to RuvC with unstacked arms; it has a different conformation from HJ DNA in complex with RuvA. In the full resolvosome a probable DNA-RuvA(4)-RuvB(12)-RuvC(2) complex forms which resolves the HJ. Requires Mg(2+) as cofactor.

The protein resides in the cytoplasm. It carries out the reaction Endonucleolytic cleavage at a junction such as a reciprocal single-stranded crossover between two homologous DNA duplexes (Holliday junction).. In terms of biological role, the RuvA-RuvB-RuvC complex processes Holliday junction (HJ) DNA during genetic recombination and DNA repair. Endonuclease that resolves HJ intermediates. Cleaves cruciform DNA by making single-stranded nicks across the HJ at symmetrical positions within the homologous arms, yielding a 5'-phosphate and a 3'-hydroxyl group; requires a central core of homology in the junction. The consensus cleavage sequence is 5'-(A/T)TT(C/G)-3'. Cleavage occurs on the 3'-side of the TT dinucleotide at the point of strand exchange. HJ branch migration catalyzed by RuvA-RuvB allows RuvC to scan DNA until it finds its consensus sequence, where it cleaves and resolves the cruciform DNA. In Coxiella burnetii (strain CbuG_Q212) (Coxiella burnetii (strain Q212)), this protein is Crossover junction endodeoxyribonuclease RuvC.